A 108-amino-acid chain; its full sequence is Protein ORFa in retron Ec67 (108 aa).

The polypeptide is Protein ORFa in retron Ec67 (Escherichia coli).